A 518-amino-acid polypeptide reads, in one-letter code: MSFSPSIAGLSGPLSALSDALTTAPESAFASLGSVFLTRLPAAPLSAPYVVGFSAETAALLGLEPGIENDPAFAELFSGNATREWPAEALPYASVYSGHQFGVWAGQLGDGRALGLGEVEHGGRRFELQLKGAGRTPYSRMGDGRAVLRSSIREYLCSEAMHHLGIPTTRALCVIGSDQPVRRETVETAAVVTRVAPSFVRFGHFEHFYSNDRTDALRALADHVIERFYPHCREADDPYLALLNEAVISTADLMVEWQAVGFCHGVMNTDNMSILGLTIDYGPFGFMDGFDAGYICNHSDSQGRYAYRMQPQIAYWNLFCLAQGLLPLLGEKHEESVRGDKAIEDAQRVLGGFKDRFAPALERRMRAKLGLETERAGDDALANRLFEVMHANRADFTLTFRNLARVSKHDASGDAAVRDLFLDRAAFDAWVNDYRARLSEETREDAARAIAMNRVNPKFVLRNHLAETAIRRAKEKDFSEVERLAAVLRRPFDEQPEHEAYAGLPPDWASSLEVSCSS.

ATP contacts are provided by Gly109, Gly111, Arg112, Lys131, Asp143, Gly144, Arg194, and Arg201. The Proton acceptor role is filled by Asp270. Mg(2+) is bound by residues Asn271 and Asp280. Residue Asp280 participates in ATP binding.

The protein belongs to the SELO family. The cofactor is Mg(2+). Requires Mn(2+) as cofactor.

The enzyme catalyses L-seryl-[protein] + ATP = 3-O-(5'-adenylyl)-L-seryl-[protein] + diphosphate. The catalysed reaction is L-threonyl-[protein] + ATP = 3-O-(5'-adenylyl)-L-threonyl-[protein] + diphosphate. It carries out the reaction L-tyrosyl-[protein] + ATP = O-(5'-adenylyl)-L-tyrosyl-[protein] + diphosphate. It catalyses the reaction L-histidyl-[protein] + UTP = N(tele)-(5'-uridylyl)-L-histidyl-[protein] + diphosphate. The enzyme catalyses L-seryl-[protein] + UTP = O-(5'-uridylyl)-L-seryl-[protein] + diphosphate. The catalysed reaction is L-tyrosyl-[protein] + UTP = O-(5'-uridylyl)-L-tyrosyl-[protein] + diphosphate. Functionally, nucleotidyltransferase involved in the post-translational modification of proteins. It can catalyze the addition of adenosine monophosphate (AMP) or uridine monophosphate (UMP) to a protein, resulting in modifications known as AMPylation and UMPylation. The polypeptide is Protein nucleotidyltransferase YdiU (Paraburkholderia xenovorans (strain LB400)).